The chain runs to 154 residues: Small ribosomal subunit protein uS7c (154 aa).

It belongs to the universal ribosomal protein uS7 family. As to quaternary structure, part of the 30S ribosomal subunit.

The protein resides in the plastid. It is found in the chloroplast. Its function is as follows. One of the primary rRNA binding proteins, it binds directly to 16S rRNA where it nucleates assembly of the head domain of the 30S subunit. This is Small ribosomal subunit protein uS7c (rps7) from Pleurastrum terricola (Filamentous green alga).